A 436-amino-acid polypeptide reads, in one-letter code: GTPase Der (436 aa).

2 consecutive EngA-type G domains span residues 4–167 (PTVA…PVEE) and 175–351 (IRFS…ESQN). GTP contacts are provided by residues 10 to 17 (GRPNVGKS), 57 to 61 (DTGGI), 119 to 122 (NKVD), 181 to 188 (GRPNVGKS), 229 to 233 (DTAGM), and 294 to 297 (NKWD). Residues 352-436 (KRIPSAVLND…PIHLIARKRK (85 aa)) enclose the KH-like domain.

The protein belongs to the TRAFAC class TrmE-Era-EngA-EngB-Septin-like GTPase superfamily. EngA (Der) GTPase family. In terms of assembly, associates with the 50S ribosomal subunit.

In terms of biological role, GTPase that plays an essential role in the late steps of ribosome biogenesis. This Streptococcus pyogenes serotype M5 (strain Manfredo) protein is GTPase Der.